We begin with the raw amino-acid sequence, 807 residues long: ATP-binding cassette sub-family F member 1 (807 aa).

The disordered stretch occupies residues methionine 1–methionine 227. At serine 22 the chain carries Phosphoserine. A compositionally biased stretch (basic residues) spans lysine 29–lysine 39. Over residues valine 47–glutamine 65 the composition is skewed to basic and acidic residues. The segment covering glutamine 73–lysine 85 has biased composition (basic residues). Serine 106 carries the phosphoserine modification. Phosphoserine; by CK2 is present on residues serine 110 and serine 141. The span at glutamate 148 to arginine 161 shows a compositional bias: basic and acidic residues. Residue serine 167 is modified to Phosphoserine. Residues leucine 197–glutamate 207 are compositionally biased toward acidic residues. The span at isoleucine 208–methionine 227 shows a compositional bias: basic and acidic residues. In terms of domain architecture, ABC transporter 1 spans isoleucine 266–leucine 510. An ATP-binding site is contributed by glycine 298–threonine 305. Residues lysine 521–threonine 542 are compositionally biased toward basic and acidic residues. The interval lysine 521–leucine 564 is disordered. Serine 557 is subject to Phosphoserine. The ABC transporter 2 domain occupies leucine 587–valine 802. An ATP-binding site is contributed by glycine 620–serine 627.

This sequence belongs to the ABC transporter superfamily. ABCF family. EF3 subfamily. As to quaternary structure, interacts (via N-terminus) with EIF2S1; the interaction is independent of its phosphorylated status. Associates (via both ABC transporter domains) with the ribosomes. Phosphorylated at phosphoserine and phosphothreonine. Phosphorylation on Ser-110 and Ser-141 by CK2; inhibits association of EIF2 with ribosomes.

The protein localises to the cytoplasm. It is found in the nucleus. It localises to the nucleoplasm. The protein resides in the nucleus envelope. Functionally, required for efficient Cap- and IRES-mediated mRNA translation initiation. Not involved in the ribosome biogenesis. This chain is ATP-binding cassette sub-family F member 1 (ABCF1), found in Sus scrofa (Pig).